The chain runs to 715 residues: Elongation factor G (715 aa).

A tr-type G domain is found at 8 to 290; sequence NRYRNIGICA…AVIDFLPAPT (283 aa). GTP-binding positions include 17 to 24, 88 to 92, and 142 to 145; these read AHVDAGKT, DTPGH, and NKMD.

It belongs to the TRAFAC class translation factor GTPase superfamily. Classic translation factor GTPase family. EF-G/EF-2 subfamily.

It is found in the cytoplasm. Catalyzes the GTP-dependent ribosomal translocation step during translation elongation. During this step, the ribosome changes from the pre-translocational (PRE) to the post-translocational (POST) state as the newly formed A-site-bound peptidyl-tRNA and P-site-bound deacylated tRNA move to the P and E sites, respectively. Catalyzes the coordinated movement of the two tRNA molecules, the mRNA and conformational changes in the ribosome. This is Elongation factor G from Pseudomonas fluorescens (strain ATCC BAA-477 / NRRL B-23932 / Pf-5).